Consider the following 113-residue polypeptide: Regulator of rDNA transcription protein 7 (113 aa).

2 consecutive transmembrane segments (helical) span residues 13-35 and 70-92; these read FLPI…LFYN and FLLG…LLFL.

Its subcellular location is the membrane. In terms of biological role, identified in a screen for mutants with decreased levels of rDNA transcription. In Saccharomyces cerevisiae (strain ATCC 204508 / S288c) (Baker's yeast), this protein is Regulator of rDNA transcription protein 7 (RRT7).